A 156-amino-acid chain; its full sequence is ATP synthase subunit b (156 aa).

A helical membrane pass occupies residues 5 to 25 (LTLIGQAIAFAFFVAFCMKFV).

It belongs to the ATPase B chain family. In terms of assembly, F-type ATPases have 2 components, F(1) - the catalytic core - and F(0) - the membrane proton channel. F(1) has five subunits: alpha(3), beta(3), gamma(1), delta(1), epsilon(1). F(0) has three main subunits: a(1), b(2) and c(10-14). The alpha and beta chains form an alternating ring which encloses part of the gamma chain. F(1) is attached to F(0) by a central stalk formed by the gamma and epsilon chains, while a peripheral stalk is formed by the delta and b chains.

Its subcellular location is the cell inner membrane. Its function is as follows. F(1)F(0) ATP synthase produces ATP from ADP in the presence of a proton or sodium gradient. F-type ATPases consist of two structural domains, F(1) containing the extramembraneous catalytic core and F(0) containing the membrane proton channel, linked together by a central stalk and a peripheral stalk. During catalysis, ATP synthesis in the catalytic domain of F(1) is coupled via a rotary mechanism of the central stalk subunits to proton translocation. Component of the F(0) channel, it forms part of the peripheral stalk, linking F(1) to F(0). The sequence is that of ATP synthase subunit b from Acinetobacter baumannii (strain AYE).